A 152-amino-acid chain; its full sequence is Catabolic 3-dehydroquinase 1 (152 aa).

Catalysis depends on tyrosine 24, which acts as the Proton acceptor. Substrate is bound by residues asparagine 75, histidine 81, and aspartate 88. Histidine 101 (proton donor) is an active-site residue. Substrate contacts are provided by residues 102 to 103 (VS) and arginine 112.

It belongs to the type-II 3-dehydroquinase family. As to quaternary structure, homododecamer. Adopts a ring-like structure, composed of an arrangement of two hexameric rings stacked on top of one another.

It catalyses the reaction 3-dehydroquinate = 3-dehydroshikimate + H2O. The protein operates within aromatic compound metabolism; 3,4-dihydroxybenzoate biosynthesis; 3,4-dihydroxybenzoate from 3-dehydroquinate: step 1/2. Is involved in the catabolism of quinate. Allows the utilization of quinate as carbon source via the beta-ketoadipate pathway. The chain is Catabolic 3-dehydroquinase 1 from Aspergillus terreus (strain NIH 2624 / FGSC A1156).